A 257-amino-acid polypeptide reads, in one-letter code: 1-(5-phosphoribosyl)-5-[(5-phosphoribosylamino)methylideneamino] imidazole-4-carboxamide isomerase (257 aa).

Residue Asp8 is the Proton acceptor of the active site. The active-site Proton donor is the Asp129.

This sequence belongs to the HisA/HisF family.

It localises to the cytoplasm. The enzyme catalyses 1-(5-phospho-beta-D-ribosyl)-5-[(5-phospho-beta-D-ribosylamino)methylideneamino]imidazole-4-carboxamide = 5-[(5-phospho-1-deoxy-D-ribulos-1-ylimino)methylamino]-1-(5-phospho-beta-D-ribosyl)imidazole-4-carboxamide. It functions in the pathway amino-acid biosynthesis; L-histidine biosynthesis; L-histidine from 5-phospho-alpha-D-ribose 1-diphosphate: step 4/9. The chain is 1-(5-phosphoribosyl)-5-[(5-phosphoribosylamino)methylideneamino] imidazole-4-carboxamide isomerase from Nostoc punctiforme (strain ATCC 29133 / PCC 73102).